Consider the following 489-residue polypeptide: 3-octaprenyl-4-hydroxybenzoate carboxy-lyase (489 aa).

Asparagine 172 provides a ligand contact to Mn(2+). Prenylated FMN contacts are provided by residues isoleucine 175–arginine 177, arginine 189–leucine 191, and arginine 194–glycine 195. Residue glutamate 238 participates in Mn(2+) binding. Aspartate 287 (proton donor) is an active-site residue.

This sequence belongs to the UbiD family. Homohexamer. It depends on prenylated FMN as a cofactor. Requires Mn(2+) as cofactor.

The protein localises to the cell membrane. It catalyses the reaction a 4-hydroxy-3-(all-trans-polyprenyl)benzoate + H(+) = a 2-(all-trans-polyprenyl)phenol + CO2. The protein operates within cofactor biosynthesis; ubiquinone biosynthesis. In terms of biological role, catalyzes the decarboxylation of 3-octaprenyl-4-hydroxy benzoate to 2-octaprenylphenol, an intermediate step in ubiquinone biosynthesis. This Salmonella arizonae (strain ATCC BAA-731 / CDC346-86 / RSK2980) protein is 3-octaprenyl-4-hydroxybenzoate carboxy-lyase.